The primary structure comprises 139 residues: MKKGALLNSDISAVISRLGHTDQIVIGDAGLPIPATTTRIDLALTQGVPGFLQVFEVVTQEMQVESAYLAQEIVKNNPQLHETLLAQLSQLEQHQGNQIALHYISHEAFKEQTKQSRAVIRSGECSPFANIILCSGVTF.

Histidine 20 serves as the catalytic Proton donor. Residues aspartate 28, histidine 106, and 128–130 (FAN) each bind substrate.

This sequence belongs to the RbsD / FucU family. RbsD subfamily. Homodecamer.

The protein resides in the cytoplasm. It carries out the reaction beta-D-ribopyranose = beta-D-ribofuranose. Its pathway is carbohydrate metabolism; D-ribose degradation; D-ribose 5-phosphate from beta-D-ribopyranose: step 1/2. Catalyzes the interconversion of beta-pyran and beta-furan forms of D-ribose. The chain is D-ribose pyranase from Yersinia enterocolitica serotype O:8 / biotype 1B (strain NCTC 13174 / 8081).